A 306-amino-acid polypeptide reads, in one-letter code: D-alanine--D-alanine ligase (306 aa).

Positions 101 to 300 (RIMLAAAGVP…FGELVTWMVE (200 aa)) constitute an ATP-grasp domain. 128-182 (MPTPYVLKPNAGGSSVGVFIVREDQAHPPQELTREDWPHGENLLAEEFIPGLELT) lines the ATP pocket. Mg(2+)-binding residues include D250, E267, and N269.

This sequence belongs to the D-alanine--D-alanine ligase family. Mg(2+) is required as a cofactor. Mn(2+) serves as cofactor.

The protein resides in the cytoplasm. It catalyses the reaction 2 D-alanine + ATP = D-alanyl-D-alanine + ADP + phosphate + H(+). It functions in the pathway cell wall biogenesis; peptidoglycan biosynthesis. Its function is as follows. Cell wall formation. The chain is D-alanine--D-alanine ligase from Xanthobacter autotrophicus (strain ATCC BAA-1158 / Py2).